The chain runs to 279 residues: Putative pyruvate, phosphate dikinase regulatory protein (279 aa).

152-159 (GVSRTSKS) lines the ADP pocket.

This sequence belongs to the pyruvate, phosphate/water dikinase regulatory protein family. PDRP subfamily.

The catalysed reaction is N(tele)-phospho-L-histidyl/L-threonyl-[pyruvate, phosphate dikinase] + ADP = N(tele)-phospho-L-histidyl/O-phospho-L-threonyl-[pyruvate, phosphate dikinase] + AMP + H(+). It catalyses the reaction N(tele)-phospho-L-histidyl/O-phospho-L-threonyl-[pyruvate, phosphate dikinase] + phosphate + H(+) = N(tele)-phospho-L-histidyl/L-threonyl-[pyruvate, phosphate dikinase] + diphosphate. In terms of biological role, bifunctional serine/threonine kinase and phosphorylase involved in the regulation of the pyruvate, phosphate dikinase (PPDK) by catalyzing its phosphorylation/dephosphorylation. The sequence is that of Putative pyruvate, phosphate dikinase regulatory protein from Anaplasma marginale (strain Florida).